Reading from the N-terminus, the 386-residue chain is Small ribosomal subunit protein uS3m (386 aa).

Belongs to the universal ribosomal protein uS3 family.

It is found in the mitochondrion. In terms of biological role, essential for mitochondrial protein synthesis and required for the maturation of small ribosomal subunits. The protein is Small ribosomal subunit protein uS3m (VAR1) of Wickerhamomyces canadensis (Yeast).